The primary structure comprises 453 residues: UPF0210 protein Mbar_A3181 (453 aa).

Belongs to the UPF0210 family.

In Methanosarcina barkeri (strain Fusaro / DSM 804), this protein is UPF0210 protein Mbar_A3181.